The chain runs to 479 residues: GDP-fucose protein O-fucosyltransferase 3 (479 aa).

Residues 1–8 (MVRIQRRK) are Cytoplasmic-facing. The chain crosses the membrane as a helical; Signal-anchor for type II membrane protein span at residues 9 to 31 (LLASCLCVTATVFLLVTLQVMVE). Over 32–479 (LGKFERKEFK…QEFWGLVFKD (448 aa)) the chain is Lumenal. N-linked (GlcNAc...) asparagine glycans are attached at residues Asn-110 and Asn-168. A disulfide bond links Cys-389 and Cys-392.

This sequence belongs to the glycosyltransferase 10 family. As to expression, expressed in lung, digestive tract, gall bladder, placenta, kidney, uterus and brain. Not detected in spleen, heart, muscle, liver and pancreas.

The protein resides in the endoplasmic reticulum membrane. The protein localises to the golgi apparatus membrane. Its subcellular location is the golgi apparatus. It is found in the lysosome. The enzyme catalyses L-threonyl-[protein] + GDP-beta-L-fucose = 3-O-(alpha-L-fucosyl)-L-threonyl-[protein] + GDP + H(+). It catalyses the reaction L-seryl-[protein] + GDP-beta-L-fucose = 3-O-(alpha-L-fucosyl)-L-seryl-[protein] + GDP + H(+). It participates in protein modification; protein glycosylation. Its function is as follows. Protein O-fucosyltransferase that specifically catalyzes O-fucosylation of serine or threonine residues in EMI domains of target proteins, such as MMRN1, MMRN2 and EMID1. Attaches fucose through an O-glycosidic linkage. O-fucosylation of EMI domain-containing proteins may be required for facilitating protein folding and secretion. May also show alpha-(1,3)-fucosyltransferase activity toward the innermost N-acetyl glucosamine (GlcNAc) residue in biantennary N-glycan acceptors. However, this was tested with a library of synthetic substrates and this activity is unsure in vivo. May be involved in biosynthesis of Lewis X-carrying biantennary N-glycans that regulate neuron stem cell self-renewal during brain development. The protein is GDP-fucose protein O-fucosyltransferase 3 of Homo sapiens (Human).